Reading from the N-terminus, the 591-residue chain is Metalloendopeptidase OPG085 (591 aa).

Histidine 41 contributes to the Zn(2+) binding site. Glutamate 44 is a catalytic residue. Zn(2+)-binding residues include histidine 45 and glutamate 112.

It belongs to the peptidase M44 family. Zn(2+) is required as a cofactor. In terms of processing, undergoes proteolytic processing during the course of infection. May be cleaved into 46 kDa and 22 kDa products (Potential).

It localises to the virion. Its function is as follows. Probably involved in maturation of some viral proteins by processing them preferentially at Ala-Gly-|-Ser/Thr/Lys motifs. Does not seem to be responsible for the cleavage of major core proteins. This chain is Metalloendopeptidase OPG085 (OPG085), found in Variola virus (isolate Human/India/Ind3/1967) (VARV).